Consider the following 490-residue polypeptide: COP9 signalosome complex subunit 2 (490 aa).

Over residues 1–30 the composition is skewed to acidic residues; it reads MSDDDFMQDSDQEYDFEYEDDEEEDTGDVD. A disordered region spans residues 1-32; sequence MSDDDFMQDSDQEYDFEYEDDEEEDTGDVDIE. The region spanning 250–418 is the PCI domain; sequence SEENWKEAQS…GVLELESRED (169 aa). The disordered stretch occupies residues 469 to 490; that stretch reads DTMRSMGSGKRGRRVGLTQRAY.

Belongs to the CSN2 family. As to quaternary structure, component of the COP9 signalosome (CSN) complex.

It is found in the cytoplasm. The protein resides in the nucleus. Its function is as follows. Component of the COP9 signalosome (CSN) complex that acts as an regulator of the ubiquitin (Ubl) conjugation pathway by mediating the deneddylation of the cullin subunit of SCF-type E3 ubiquitin-protein ligase complexes. The CSN complex is involved in the regulation of the circadian clock through its control of the stability of the SCF(FWD-1) complex. The sequence is that of COP9 signalosome complex subunit 2 (csn-2) from Neurospora crassa (strain ATCC 24698 / 74-OR23-1A / CBS 708.71 / DSM 1257 / FGSC 987).